The primary structure comprises 1957 residues: Chromatin modification-related protein EAF1 A (1957 aa).

Disordered regions lie at residues A108–V208, N261–T287, G323–N373, and N449–K469. Basic and acidic residues predominate over residues S140–L151. 3 stretches are compositionally biased toward polar residues: residues N261–T270, G333–N342, and T355–A372. The HSA domain occupies C563–S641. Disordered stretches follow at residues G833–K909 and A928–W950. Polar residues predominate over residues T884 to Y898. The SANT domain occupies S1049 to K1105. Disordered stretches follow at residues A1107 to P1131, T1282 to S1314, L1344 to H1367, Q1449 to N1644, P1687 to A1768, E1804 to S1840, and S1876 to E1957. Composition is skewed to polar residues over residues D1116–S1125, A1290–S1314, L1344–A1358, S1459–V1472, L1479–L1492, and Q1501–Q1510. 2 stretches are compositionally biased toward low complexity: residues Q1523 to Q1534 and V1545 to Q1562. Residues T1563–P1579 are compositionally biased toward pro residues. Composition is skewed to polar residues over residues N1582 to Q1595, S1604 to K1618, R1635 to N1644, D1691 to P1722, and Q1734 to L1758. A compositionally biased stretch (low complexity) spans S1759–A1768. Residues L1805 to P1815 are compositionally biased toward basic and acidic residues. 2 stretches are compositionally biased toward polar residues: residues Q1819–T1832 and S1876–L1894. Basic and acidic residues-rich tracts occupy residues S1913–E1922 and L1932–E1942.

This sequence belongs to the EAF1 family. In terms of assembly, component of the NuA4 histone acetyltransferase complex. Interacts with ARP4 and SWC4, and (via HSA domain) with TAF14 and TAF14B. In terms of tissue distribution, expressed in leaves.

It is found in the nucleus. In terms of biological role, component of the NuA4 histone acetyltransferase complex which is involved in transcriptional activation of selected genes principally by acetylation of nucleosomal histone H4 and H2A. This Arabidopsis thaliana (Mouse-ear cress) protein is Chromatin modification-related protein EAF1 A (EAF1A).